The chain runs to 237 residues: Aliphatic sulfonates import ATP-binding protein SsuB 1 (237 aa).

The ABC transporter domain occupies 5–221 (LMNIRVDRKA…PRDRRDPLLA (217 aa)). 38–45 (GPSGCGKS) serves as a coordination point for ATP.

It belongs to the ABC transporter superfamily. Aliphatic sulfonates importer (TC 3.A.1.17.2) family. In terms of assembly, the complex is composed of two ATP-binding proteins (SsuB), two transmembrane proteins (SsuC) and a solute-binding protein (SsuA).

It localises to the cell inner membrane. It carries out the reaction ATP + H2O + aliphatic sulfonate-[sulfonate-binding protein]Side 1 = ADP + phosphate + aliphatic sulfonateSide 2 + [sulfonate-binding protein]Side 1.. Its function is as follows. Part of the ABC transporter complex SsuABC involved in aliphatic sulfonates import. Responsible for energy coupling to the transport system. The sequence is that of Aliphatic sulfonates import ATP-binding protein SsuB 1 from Pseudomonas savastanoi pv. phaseolicola (strain 1448A / Race 6) (Pseudomonas syringae pv. phaseolicola (strain 1448A / Race 6)).